An 82-amino-acid polypeptide reads, in one-letter code: Sulfur carrier protein TusA (82 aa).

Cys19 functions as the Cysteine persulfide intermediate in the catalytic mechanism.

The protein belongs to the sulfur carrier protein TusA family.

The protein resides in the cytoplasm. Functionally, sulfur carrier protein which probably makes part of a sulfur-relay system. The sequence is that of Sulfur carrier protein TusA from Photobacterium profundum (strain SS9).